Consider the following 124-residue polypeptide: Small ribosomal subunit protein uS12 (124 aa).

Residues 1 to 28 form a disordered region; the sequence is MPTIQQLIRTERQSSKAKTKSPALKSCP. Asp-89 bears the 3-methylthioaspartic acid mark. The segment at 104–124 is disordered; the sequence is TAGVKDRRQSRSKYGAKTPKE.

It belongs to the universal ribosomal protein uS12 family. As to quaternary structure, part of the 30S ribosomal subunit. Contacts proteins S8 and S17. May interact with IF1 in the 30S initiation complex.

Its function is as follows. With S4 and S5 plays an important role in translational accuracy. Functionally, interacts with and stabilizes bases of the 16S rRNA that are involved in tRNA selection in the A site and with the mRNA backbone. Located at the interface of the 30S and 50S subunits, it traverses the body of the 30S subunit contacting proteins on the other side and probably holding the rRNA structure together. The combined cluster of proteins S8, S12 and S17 appears to hold together the shoulder and platform of the 30S subunit. In Synechococcus sp. (strain WH7803), this protein is Small ribosomal subunit protein uS12.